A 1176-amino-acid chain; its full sequence is Pesticidal crystal protein Cry1Aa (1176 aa).

This sequence belongs to the delta endotoxin family.

Its function is as follows. Promotes colloidosmotic lysis by binding to the midgut epithelial cells of many lepidopteran larvae. The polypeptide is Pesticidal crystal protein Cry1Aa (cry1Aa) (Bacillus thuringiensis subsp. entomocidus).